The chain runs to 295 residues: Acetyl-coenzyme A carboxylase carboxyl transferase subunit beta (295 aa).

The tract at residues 1–20 (MSWLSKLMPSGIRTENTPAK) is disordered. In terms of domain architecture, CoA carboxyltransferase N-terminal spans 28 to 295 (LWEKCSNCGS…QPHPQDADAA (268 aa)). C32, C35, C51, and C54 together coordinate Zn(2+). The segment at 32 to 54 (CSNCGSALYGPELEENLEVCPKC) adopts a C4-type zinc-finger fold.

The protein belongs to the AccD/PCCB family. Acetyl-CoA carboxylase is a heterohexamer composed of biotin carboxyl carrier protein (AccB), biotin carboxylase (AccC) and two subunits each of ACCase subunit alpha (AccA) and ACCase subunit beta (AccD). The cofactor is Zn(2+).

The protein localises to the cytoplasm. It catalyses the reaction N(6)-carboxybiotinyl-L-lysyl-[protein] + acetyl-CoA = N(6)-biotinyl-L-lysyl-[protein] + malonyl-CoA. It participates in lipid metabolism; malonyl-CoA biosynthesis; malonyl-CoA from acetyl-CoA: step 1/1. Functionally, component of the acetyl coenzyme A carboxylase (ACC) complex. Biotin carboxylase (BC) catalyzes the carboxylation of biotin on its carrier protein (BCCP) and then the CO(2) group is transferred by the transcarboxylase to acetyl-CoA to form malonyl-CoA. In Xanthomonas axonopodis pv. citri (strain 306), this protein is Acetyl-coenzyme A carboxylase carboxyl transferase subunit beta.